Here is a 445-residue protein sequence, read N- to C-terminus: Phosphatidate cytidylyltransferase 2 (445 aa).

Residues 1–39 are compositionally biased toward basic and acidic residues; that stretch reads MTELRQRVAREPEAPPEDKESESEAKADGETASDSESRV. The segment at 1-52 is disordered; it reads MTELRQRVAREPEAPPEDKESESEAKADGETASDSESRVEAVTQPPSADDTP. Ser-21 is subject to Phosphoserine. Thr-31 carries the post-translational modification Phosphothreonine. Ser-33, Ser-35, and Ser-37 each carry phosphoserine. Phosphothreonine is present on Thr-51. Helical transmembrane passes span 79-99, 132-152, 166-186, 213-233, 262-282, and 340-360; these read MIAFFFIIIYLGPMVLMMIVM, FLLCVNYFFYGETVTDYFFTL, HRFISFTLYLTGFCMFVLSLV, LVIHNLFEGMIWFIVPISCVI, GFIGGFFATVVFGLLLSYVMS, and IALSTFASLIGPFGGFFASGF.

It belongs to the CDS family. Homodimer.

The protein resides in the endoplasmic reticulum membrane. It carries out the reaction a 1,2-diacyl-sn-glycero-3-phosphate + CTP + H(+) = a CDP-1,2-diacyl-sn-glycerol + diphosphate. The enzyme catalyses 1-octadecanoyl-2-(5Z,8Z,11Z,14Z-eicosatetraenoyl)-sn-glycero-3-phosphate + CTP + H(+) = 1-octadecanoyl-2-(5Z,8Z,11Z,14Z-eicosatetraenoyl)-sn-glycero-3-cytidine-5'-diphosphate + diphosphate. It catalyses the reaction 1-octadecanoyl-2-(9Z,12Z-octadecadienoyl)-sn-glycero-3-phosphate + CTP + H(+) = 1-octadecanoyl-2-(9Z,12Z-octadecadienoyl)-sn-glycero-3-cytidine-5'-diphosphate + diphosphate. The catalysed reaction is 1-hexadecanoyl-2-(5Z,8Z,11Z,14Z-eicosatetraenoyl)-sn-glycero-3-phosphate + CTP + H(+) = 1-hexadecanoyl-2-(5Z,8Z,11Z,14Z-eicosatetraenoyl)-sn-glycero-3-cytidine-5'-diphosphate + diphosphate. It carries out the reaction 1,2-di-(5Z,8Z,11Z,14Z)-eicosatetraenoyl-sn-glycero-3-phosphate + CTP + H(+) = 1,2-di-(5Z,8Z,11Z,14Z-eicosatetraenoyl)-sn-glycero-3-cytidine-5'-diphosphate + diphosphate. The enzyme catalyses 1-octadecanoyl-2-(9Z-octadecenoyl)-sn-glycero-3-phosphate + CTP + H(+) = 1-octadecanoyl-2-(9Z-octadecenoyl)-sn-glycero-3-cytidine-5'-diphosphate + diphosphate. It catalyses the reaction 1-octadecanoyl-2-(4Z,7Z,10Z,13Z,16Z,19Z-docosahexaenoyl)-sn-glycero-3-phosphate + CTP + H(+) = 1-octadecanoyl-2-(4Z,7Z,10Z,13Z,16Z,19Z-docosahexaenoyl)-sn-glycero-3-cytidine-5'-diphosphate + diphosphate. The catalysed reaction is 1,2-di-(9Z,12Z-octadecadienoyl)-sn-glycero-3-phosphate + CTP + H(+) = 1,2-di-(9Z,12Z-octadecadienoyl)-sn-glycero-3-cytidine-5'-diphosphate + diphosphate. It carries out the reaction 1,2-di-(9Z-octadecenoyl)-sn-glycero-3-phosphate + CTP + H(+) = 1,2-di-(9Z-octadecenoyl)-sn-glycero-3-cytidine-5'-diphosphate + diphosphate. It functions in the pathway phospholipid metabolism; CDP-diacylglycerol biosynthesis; CDP-diacylglycerol from sn-glycerol 3-phosphate: step 3/3. Its function is as follows. Catalyzes the conversion of phosphatidic acid (PA) to CDP-diacylglycerol (CDP-DAG), an essential intermediate in the synthesis of phosphatidylglycerol, cardiolipin and phosphatidylinositol. Exhibits specificity for the nature of the acyl chains at the sn-1 and sn-2 positions in the substrate, PA and the preferred acyl chain composition is 1-stearoyl-2-arachidonoyl-sn-phosphatidic acid. Plays an important role in regulating the growth and maturation of lipid droplets which are storage organelles at the center of lipid and energy homeostasis. In Bos taurus (Bovine), this protein is Phosphatidate cytidylyltransferase 2 (CDS2).